Reading from the N-terminus, the 911-residue chain is Valine--tRNA ligase (911 aa).

A 'HIGH' region motif is present at residues 53-63; the sequence is PNVTGTLHLGH. The 'KMSKS' region signature appears at 533-537; sequence KMSKS. Lysine 536 is an ATP binding site. Positions 845 to 910 form a coiled coil; the sequence is KEIERLTKEL…NRLAMLRSMQ (66 aa).

It belongs to the class-I aminoacyl-tRNA synthetase family. ValS type 1 subfamily. As to quaternary structure, monomer.

The protein localises to the cytoplasm. The catalysed reaction is tRNA(Val) + L-valine + ATP = L-valyl-tRNA(Val) + AMP + diphosphate. Functionally, catalyzes the attachment of valine to tRNA(Val). As ValRS can inadvertently accommodate and process structurally similar amino acids such as threonine, to avoid such errors, it has a 'posttransfer' editing activity that hydrolyzes mischarged Thr-tRNA(Val) in a tRNA-dependent manner. The chain is Valine--tRNA ligase from Symbiobacterium thermophilum (strain DSM 24528 / JCM 14929 / IAM 14863 / T).